The primary structure comprises 104 residues: NADH-quinone oxidoreductase subunit K (104 aa).

3 consecutive transmembrane segments (helical) span residues 4 to 24 (VPAS…LFGA), 31 to 51 (VIVL…LVAF), and 67 to 87 (LFTM…LIAL).

This sequence belongs to the complex I subunit 4L family. In terms of assembly, NDH-1 is composed of 14 different subunits. Subunits NuoA, H, J, K, L, M, N constitute the membrane sector of the complex.

Its subcellular location is the cell membrane. It carries out the reaction a quinone + NADH + 5 H(+)(in) = a quinol + NAD(+) + 4 H(+)(out). Its function is as follows. NDH-1 shuttles electrons from NADH, via FMN and iron-sulfur (Fe-S) centers, to quinones in the respiratory chain. The immediate electron acceptor for the enzyme in this species is believed to be a menaquinone. Couples the redox reaction to proton translocation (for every two electrons transferred, four hydrogen ions are translocated across the cytoplasmic membrane), and thus conserves the redox energy in a proton gradient. The sequence is that of NADH-quinone oxidoreductase subunit K from Bacillus cereus (strain Q1).